We begin with the raw amino-acid sequence, 4981 residues long: Protocadherin Fat 4 (4981 aa).

The N-terminal stretch at 1–42 is a signal peptide; the sequence is MNLAANRAPGRRRLPLPSPSLCQLLRVWGLLSLLPGSARVQA. The Extracellular portion of the chain corresponds to 43–4505; the sequence is AEQRQVFQVM…PDEISLPLWA (4463 aa). Cadherin domains are found at residues 44–135, 136–250, 251–353, 359–475, 476–582, 584–689, 690–793, 794–893, 894–996, 997–1100, 1101–1210, 1211–1315, 1316–1420, 1421–1529, 1529–1629, 1630–1740, 1741–1841, 1842–1944, 1945–2051, 2051–2154, 2155–2259, 2260–2364, 2365–2468, 2469–2569, 2570–2671, 2672–2775, 2775–2874, 2875–2985, 2986–3091, 3092–3196, 3197–3300, 3301–3406, 3407–3512, and 3511–3622; these read EQRQ…APVF, PDPS…PPVF, GSSH…DPVV, PATS…PPVF, EQQV…KPVF, QPEG…SPVF, YPVQ…PPVF, SQAA…APHF, LQAV…PPVF, DQIS…RPLF, NSTN…APKF, LKDF…TPSF, PKST…PPSF, PPGD…VPMF, FISQ…GPVF, TQTK…PPVF, PTDT…TPRF, SRPV…PPVF, SMSS…PPMF, FLSP…NPVF, AQAM…VPVF, ELSP…VPTF, ANNM…PPRF, QHHP…FPKV, RAKE…APTF, EEDP…APRF, FSQI…TPRF, SRPS…PPQF, LQNK…TPEF, SQNH…SPVF, VPDE…VPRF, VSKL…PPVF, SLST…GPVL, and VLTV…VEIF. Residues Asn-84 and Asn-237 are each glycosylated (N-linked (GlcNAc...) asparagine). N-linked (GlcNAc...) asparagine glycans are attached at residues Asn-393, Asn-416, Asn-435, Asn-483, Asn-551, Asn-615, Asn-676, Asn-721, Asn-825, Asn-880, Asn-948, Asn-1085, Asn-1101, Asn-1104, Asn-1225, Asn-1296, Asn-1389, and Asn-1514. N-linked (GlcNAc...) asparagine glycans are attached at residues Asn-1828, Asn-1899, Asn-1967, and Asn-2119. N-linked (GlcNAc...) asparagine glycosylation is found at Asn-2387 and Asn-2432. N-linked (GlcNAc...) asparagine glycosylation is found at Asn-2923, Asn-2939, Asn-3038, Asn-3142, Asn-3219, Asn-3394, and Asn-3479. N-linked (GlcNAc...) asparagine glycans are attached at residues Asn-3708 and Asn-3760. The region spanning 3804–3862 is the EGF-like 1 domain; it reads DHDPCIHGPCQNGGSCLRRLAVGSALKIQESLPVIIVANEPLQPSQCKCVPGYAGSWCE. Disulfide bonds link Cys-3808–Cys-3819, Cys-3813–Cys-3850, Cys-3852–Cys-3861, Cys-3868–Cys-3879, Cys-3873–Cys-3888, Cys-3890–Cys-3899, Cys-3906–Cys-3917, Cys-3911–Cys-3926, Cys-3928–Cys-3937, Cys-3944–Cys-3955, Cys-3949–Cys-3964, and Cys-3966–Cys-3975. The EGF-like 2; calcium-binding domain maps to 3864–3900; it reads DIDECLPAPCHNGGTCHNLVGGFSCSCPEGFTGRACE. Residues 3902–3938 enclose the EGF-like 3; calcium-binding domain; sequence DINECLPSPCKHGAVCQNFPGGFNCVCKTGYTGKMCE. Positions 3940–3976 constitute an EGF-like 4 domain; the sequence is SVNYCECNPCFNGGSCQSGVESYYCHCPFGVFGKHCE. One can recognise a Laminin G-like 1 domain in the interval 3977–4161; it reads LNSYGFEELS…LAAQGILDQC (185 aa). Asn-4019 carries an N-linked (GlcNAc...) asparagine glycan. 4 disulfide bridges follow: Cys-4135–Cys-4161, Cys-4168–Cys-4179, Cys-4173–Cys-4188, and Cys-4190–Cys-4199. Residues 4164 to 4200 enclose the EGF-like 5 domain; it reads LEGTCARNPCQHGGTCVDFWSWQQCQCMEGLTGKYCE. The Laminin G-like 2 domain occupies 4219 to 4399; that stretch reads YHMSQSEKRE…KTDPSVKIGC (181 aa). 2 N-linked (GlcNAc...) asparagine glycosylation sites follow: Asn-4269 and Asn-4314. 4 disulfide bridges follow: Cys-4366-Cys-4399, Cys-4431-Cys-4442, Cys-4436-Cys-4452, and Cys-4454-Cys-4463. The EGF-like 6 domain occupies 4427–4464; sequence PPGDCASHPCQNGGSCEPGLLSGYTCSCPESHTGRTCE. The chain crosses the membrane as a helical span at residues 4506–4526; the sequence is VPAIVGSCATALALLVLSLIL. The Cytoplasmic portion of the chain corresponds to 4527-4981; sequence CNQCRGKMPK…AKDGEAEQYV (455 aa). Disordered regions lie at residues 4535–4585, 4677–4713, 4753–4773, 4796–4911, and 4957–4981; these read PKNP…PDII, PSSY…KPSA, RRSK…SRLK, RLNT…PAAA, and AAGN…EQYV. Residues 4677-4701 show a composition bias toward polar residues; sequence PSSYGQGLRTSSLSHSACPTPNPLS. The necessary and sufficient for interaction with MPDZ stretch occupies residues 4708-4797; that stretch reads FSKPSAFYRN…GLSIEEVERL (90 aa). Over residues 4811–4823 the composition is skewed to basic and acidic residues; that stretch reads DHGRSSSEEDCRR. Phosphoserine is present on Ser-4878. A compositionally biased stretch (basic and acidic residues) spans 4971–4981; sequence AAKDGEAEQYV.

Heterophilic interaction with DCHS1; this interaction affects their respective protein levels. Interacts (via cytoplasmic domain) with MPDZ. Forms a complex with PALS1 and MPDZ. Widely expressed.

It localises to the membrane. Cadherins are cell-cell interaction molecules. FAT4 plays a role in the maintenance of planar cell polarity as well as in inhibition of YAP1-mediated neuroprogenitor cell proliferation and differentiation. This is Protocadherin Fat 4 (Fat4) from Mus musculus (Mouse).